The primary structure comprises 355 residues: Heat-inducible transcription repressor HrcA (355 aa).

It belongs to the HrcA family.

Negative regulator of class I heat shock genes (grpE-dnaK-dnaJ and groELS operons). Prevents heat-shock induction of these operons. This is Heat-inducible transcription repressor HrcA from Nitratidesulfovibrio vulgaris (strain DP4) (Desulfovibrio vulgaris).